The chain runs to 254 residues: Triosephosphate isomerase (254 aa).

12–14 (NWK) contacts substrate. His-99 functions as the Electrophile in the catalytic mechanism. Catalysis depends on Glu-169, which acts as the Proton acceptor. Residues Gly-175, Ser-214, and 235–236 (GG) each bind substrate.

Belongs to the triosephosphate isomerase family. Homodimer.

It localises to the cytoplasm. The enzyme catalyses D-glyceraldehyde 3-phosphate = dihydroxyacetone phosphate. The protein operates within carbohydrate biosynthesis; gluconeogenesis. Its pathway is carbohydrate degradation; glycolysis; D-glyceraldehyde 3-phosphate from glycerone phosphate: step 1/1. Involved in the gluconeogenesis. Catalyzes stereospecifically the conversion of dihydroxyacetone phosphate (DHAP) to D-glyceraldehyde-3-phosphate (G3P). The chain is Triosephosphate isomerase from Brucella melitensis biotype 1 (strain ATCC 23456 / CCUG 17765 / NCTC 10094 / 16M).